The following is a 391-amino-acid chain: MQKLINSVQNYAWGSKTALTELYGMENPSSQPMAELWMGAHPKSSSRVQNAAGDIVSLRDVIESDKSTLLGEAVAKRFGELPFLFKVLCAAQPLSIQVHPNKHNSEIGFAKENAAGIPMDAAERNYKDPNHKPELVFALTPFLAMNAFREFSEIVSLLQPVAGAHPAIAHFLQQPDAERLSELFASLLNMQGEEKSRALAILKSALDSQQGEPWQTIRLISEFYPEDSGLFSPLLLNVVKLNPGEAMFLFAETPHAYLQGVALEVMANSDNVLRAGLTPKYIDIPELVANVKFEAKPANQLLTQPVKQGAELDFPIPVDDFAFSLHDLSDKETTISQQSAAILFCVEGDATLWKGSQQLQLKPGESAFIAANESPVTVKGHGRLARVYNKL.

Positions 97, 99, 134, and 255 each coordinate Zn(2+). Arginine 274 is an active-site residue. An N6-acetyllysine modification is found at lysine 280.

Belongs to the mannose-6-phosphate isomerase type 1 family. Zn(2+) serves as cofactor.

The protein localises to the cytoplasm. It catalyses the reaction D-mannose 6-phosphate = D-fructose 6-phosphate. Its function is as follows. Involved in the conversion of glucose to GDP-L-fucose, which can be converted to L-fucose, a capsular polysaccharide. This Escherichia coli (strain K12) protein is Mannose-6-phosphate isomerase (manA).